The primary structure comprises 351 residues: Peptide chain release factor 1 (351 aa).

Q233 is modified (N5-methylglutamine).

It belongs to the prokaryotic/mitochondrial release factor family. In terms of processing, methylated by PrmC. Methylation increases the termination efficiency of RF1.

The protein resides in the cytoplasm. Functionally, peptide chain release factor 1 directs the termination of translation in response to the peptide chain termination codons UAG and UAA. This Treponema pallidum subsp. pallidum (strain SS14) protein is Peptide chain release factor 1.